A 976-amino-acid chain; its full sequence is Apical junction component 1 homolog (976 aa).

The disordered stretch occupies residues 21-49 (ATPGPASKCSPCERSVARPAEPAPFNKRH). S52 bears the Phosphoserine mark. 3 disordered regions span residues 61–136 (GPAM…EPAY), 220–242 (PQFH…PTPS), and 264–294 (YAER…RGSF). Residues 98–113 (RAPPGLTPAPASPPVL) show a composition bias toward pro residues. Residues 116–134 (RGREAQRAARAEASPRREP) are compositionally biased toward basic and acidic residues. S129 bears the Phosphoserine mark. The residue at position 322 (R322) is an Omega-N-methylarginine. Residues 412–443 (LQVVPPSDPDPLLASWHGGTGTSPPRLATDSR) form a disordered region. A phosphoserine mark is found at S468, S509, and S512. Disordered regions lie at residues 539–574 (DLRA…SGRQ) and 614–660 (LDSR…ADED). Composition is skewed to low complexity over residues 616 to 625 (SRPAGSGAPA) and 633 to 655 (PASA…SPEP). The residue at position 749 (R749) is an Asymmetric dimethylarginine; alternate. R749 bears the Omega-N-methylarginine; alternate mark. Positions 855–888 (GSPARPPPARSREPDMETLILTPPPGTAGLDQDG) are disordered.

Its subcellular location is the apical cell membrane. The protein localises to the cell projection. It localises to the cilium. It is found in the cell junction. The protein resides in the adherens junction. Functionally, may be involved in the control of adherens junction integrity. This is Apical junction component 1 homolog from Homo sapiens (Human).